A 299-amino-acid polypeptide reads, in one-letter code: Nitrogenase iron protein (299 aa).

Residue 11-18 (GKGGIGKS) participates in ATP binding. Residue Cys99 participates in [4Fe-4S] cluster binding. Arg102 is modified (ADP-ribosylarginine; by dinitrogenase reductase ADP-ribosyltransferase). Cys133 contacts [4Fe-4S] cluster.

It belongs to the NifH/BchL/ChlL family. Homodimer. [4Fe-4S] cluster serves as cofactor. In terms of processing, the reversible ADP-ribosylation of Arg-102 inactivates the nitrogenase reductase and regulates nitrogenase activity.

It catalyses the reaction N2 + 8 reduced [2Fe-2S]-[ferredoxin] + 16 ATP + 16 H2O = H2 + 8 oxidized [2Fe-2S]-[ferredoxin] + 2 NH4(+) + 16 ADP + 16 phosphate + 6 H(+). Functionally, the key enzymatic reactions in nitrogen fixation are catalyzed by the nitrogenase complex, which has 2 components: the iron protein and the molybdenum-iron protein. This chain is Nitrogenase iron protein, found in Rhodopseudomonas palustris (strain BisB5).